We begin with the raw amino-acid sequence, 644 residues long: Exoribonuclease 2 (644 aa).

An RNB domain is found at 189–516; it reads RQDLTALNFV…NHRLLKAVIK (328 aa). Residues 561-643 enclose the S1 motif domain; that stretch reads NTRFAAEIID…ETRSIIARPA (83 aa).

It belongs to the RNR ribonuclease family. RNase II subfamily.

Its subcellular location is the cytoplasm. The catalysed reaction is Exonucleolytic cleavage in the 3'- to 5'-direction to yield nucleoside 5'-phosphates.. Involved in mRNA degradation. Hydrolyzes single-stranded polyribonucleotides processively in the 3' to 5' direction. The sequence is that of Exoribonuclease 2 from Salmonella typhi.